We begin with the raw amino-acid sequence, 664 residues long: Glycine--tRNA ligase beta subunit (664 aa).

It belongs to the class-II aminoacyl-tRNA synthetase family. Tetramer of two alpha and two beta subunits.

The protein resides in the cytoplasm. The catalysed reaction is tRNA(Gly) + glycine + ATP = glycyl-tRNA(Gly) + AMP + diphosphate. In Rickettsia typhi (strain ATCC VR-144 / Wilmington), this protein is Glycine--tRNA ligase beta subunit.